The chain runs to 145 residues: 3-hydroxyacyl-[acyl-carrier-protein] dehydratase FabZ (145 aa).

Histidine 49 is an active-site residue.

It belongs to the thioester dehydratase family. FabZ subfamily.

The protein resides in the cytoplasm. The catalysed reaction is a (3R)-hydroxyacyl-[ACP] = a (2E)-enoyl-[ACP] + H2O. In terms of biological role, involved in unsaturated fatty acids biosynthesis. Catalyzes the dehydration of short chain beta-hydroxyacyl-ACPs and long chain saturated and unsaturated beta-hydroxyacyl-ACPs. In Rickettsia felis (strain ATCC VR-1525 / URRWXCal2) (Rickettsia azadi), this protein is 3-hydroxyacyl-[acyl-carrier-protein] dehydratase FabZ.